The following is a 159-amino-acid chain: Transcriptional repressor NrdR (159 aa).

A zinc finger lies at C3–C34. Residues I49–D139 form the ATP-cone domain.

The protein belongs to the NrdR family. Zn(2+) is required as a cofactor.

In terms of biological role, negatively regulates transcription of bacterial ribonucleotide reductase nrd genes and operons by binding to NrdR-boxes. This Prochlorococcus marinus subsp. pastoris (strain CCMP1986 / NIES-2087 / MED4) protein is Transcriptional repressor NrdR.